A 302-amino-acid chain; its full sequence is Nucleotide-binding protein Bamb_2855 (302 aa).

8-15 (GISGSGKS) contacts ATP. 57-60 (DARS) is a GTP binding site.

Belongs to the RapZ-like family.

Functionally, displays ATPase and GTPase activities. This is Nucleotide-binding protein Bamb_2855 from Burkholderia ambifaria (strain ATCC BAA-244 / DSM 16087 / CCUG 44356 / LMG 19182 / AMMD) (Burkholderia cepacia (strain AMMD)).